A 554-amino-acid chain; its full sequence is Glucose-6-phosphate isomerase (554 aa).

Glutamate 358 serves as the catalytic Proton donor. Active-site residues include histidine 389 and lysine 515. Residues 527–540 (ADNSPAPQSDSSTD) are compositionally biased toward polar residues. The disordered stretch occupies residues 527–554 (ADNSPAPQSDSSTDALVRRYRSERGRTS). Basic and acidic residues predominate over residues 542 to 554 (LVRRYRSERGRTS).

Belongs to the GPI family.

Its subcellular location is the cytoplasm. The catalysed reaction is alpha-D-glucose 6-phosphate = beta-D-fructose 6-phosphate. Its pathway is carbohydrate biosynthesis; gluconeogenesis. The protein operates within carbohydrate degradation; glycolysis; D-glyceraldehyde 3-phosphate and glycerone phosphate from D-glucose: step 2/4. Its function is as follows. Catalyzes the reversible isomerization of glucose-6-phosphate to fructose-6-phosphate. This Mycobacterium avium (strain 104) protein is Glucose-6-phosphate isomerase.